The primary structure comprises 355 residues: Methylthioribose-1-phosphate isomerase (355 aa).

Substrate contacts are provided by residues 47-49 (RGA), Arg90, and Gln197. The Proton donor role is filled by Asp238. 248–249 (NK) provides a ligand contact to substrate.

This sequence belongs to the eIF-2B alpha/beta/delta subunits family. MtnA subfamily.

The catalysed reaction is 5-(methylsulfanyl)-alpha-D-ribose 1-phosphate = 5-(methylsulfanyl)-D-ribulose 1-phosphate. It functions in the pathway amino-acid biosynthesis; L-methionine biosynthesis via salvage pathway; L-methionine from S-methyl-5-thio-alpha-D-ribose 1-phosphate: step 1/6. Catalyzes the interconversion of methylthioribose-1-phosphate (MTR-1-P) into methylthioribulose-1-phosphate (MTRu-1-P). The polypeptide is Methylthioribose-1-phosphate isomerase (Herpetosiphon aurantiacus (strain ATCC 23779 / DSM 785 / 114-95)).